A 234-amino-acid chain; its full sequence is MAHTTPRSHPPPHSLLQNLTTQSLLLSHLFTLIASPPNPNTSTQTQLNQVYSALQLSTLDLSGLVKEVGHHQEAYRRLVEKKNEVAGLEMRVRGLVKRLEEGRKELEGMIDQGERSLEDIEKSEREPVPAKTLMAHAQSLSKHSSAPVSSLLAPVDKAQYAPWPTEMSMRMGLLFQLEGSMSGMGERGVVGEEQKAPQKVEERREHVEHEESDRRYDPNAVFQLDLNSDESDED.

Positions 71 to 124 form a coiled coil; sequence HQEAYRRLVEKKNEVAGLEMRVRGLVKRLEEGRKELEGMIDQGERSLEDIEKSE. The tract at residues 188–234 is disordered; sequence GVVGEEQKAPQKVEERREHVEHEESDRRYDPNAVFQLDLNSDESDED. Positions 189–217 are enriched in basic and acidic residues; that stretch reads VVGEEQKAPQKVEERREHVEHEESDRRYD.

The protein belongs to the Mediator complex subunit 4 family. In terms of assembly, component of the Mediator complex.

Its subcellular location is the nucleus. Its function is as follows. Component of the Mediator complex, a coactivator involved in the regulated transcription of nearly all RNA polymerase II-dependent genes. Mediator functions as a bridge to convey information from gene-specific regulatory proteins to the basal RNA polymerase II transcription machinery. Mediator is recruited to promoters by direct interactions with regulatory proteins and serves as a scaffold for the assembly of a functional preinitiation complex with RNA polymerase II and the general transcription factors. The polypeptide is Mediator of RNA polymerase II transcription subunit 4 (MED4) (Cryptococcus neoformans var. neoformans serotype D (strain JEC21 / ATCC MYA-565) (Filobasidiella neoformans)).